We begin with the raw amino-acid sequence, 294 residues long: 4-hydroxy-tetrahydrodipicolinate synthase (294 aa).

S47 contributes to the pyruvate binding site. The active-site Proton donor/acceptor is the Y135. Residue K163 is the Schiff-base intermediate with substrate of the active site. Residue I205 coordinates pyruvate.

This sequence belongs to the DapA family. As to quaternary structure, homotetramer; dimer of dimers.

The protein resides in the cytoplasm. It catalyses the reaction L-aspartate 4-semialdehyde + pyruvate = (2S,4S)-4-hydroxy-2,3,4,5-tetrahydrodipicolinate + H2O + H(+). It functions in the pathway amino-acid biosynthesis; L-lysine biosynthesis via DAP pathway; (S)-tetrahydrodipicolinate from L-aspartate: step 3/4. Catalyzes the condensation of (S)-aspartate-beta-semialdehyde [(S)-ASA] and pyruvate to 4-hydroxy-tetrahydrodipicolinate (HTPA). The sequence is that of 4-hydroxy-tetrahydrodipicolinate synthase from Ralstonia nicotianae (strain ATCC BAA-1114 / GMI1000) (Ralstonia solanacearum).